Reading from the N-terminus, the 510-residue chain is NAD(P)H-quinone oxidoreductase subunit 2, chloroplastic (510 aa).

Transmembrane regions (helical) follow at residues 24-44, 59-79, 99-119, 124-144, 149-169, 183-203, 295-315, 323-343, 347-367, 395-415, and 418-438; these read LLLF…GLIL, WFYF…LFRW, IFQF…VEYI, MAIT…MFLC, LITI…LSGY, YLLM…WLYG, WHLL…LIAI, MLAY…IVGD, GYAS…GTFA, ALSS…AGFF, and LYLF…IGLL.

Belongs to the complex I subunit 2 family. NDH is composed of at least 16 different subunits, 5 of which are encoded in the nucleus.

Its subcellular location is the plastid. It is found in the chloroplast thylakoid membrane. The catalysed reaction is a plastoquinone + NADH + (n+1) H(+)(in) = a plastoquinol + NAD(+) + n H(+)(out). It catalyses the reaction a plastoquinone + NADPH + (n+1) H(+)(in) = a plastoquinol + NADP(+) + n H(+)(out). NDH shuttles electrons from NAD(P)H:plastoquinone, via FMN and iron-sulfur (Fe-S) centers, to quinones in the photosynthetic chain and possibly in a chloroplast respiratory chain. The immediate electron acceptor for the enzyme in this species is believed to be plastoquinone. Couples the redox reaction to proton translocation, and thus conserves the redox energy in a proton gradient. The sequence is that of NAD(P)H-quinone oxidoreductase subunit 2, chloroplastic from Asparagus officinalis (Garden asparagus).